A 417-amino-acid chain; its full sequence is Calreticulin (417 aa).

An N-terminal signal peptide occupies residues 1–17; sequence MLLPVPLLLGLLGLAAA. Residues 18–197 are N-domain; that stretch reads DPTVYFKEQF…NSQVESGSLE (180 aa). Position 26 (Q26) interacts with Ca(2+). K48 is subject to N6-acetyllysine. K62 and K64 together coordinate Ca(2+). Residue K64 is modified to N6-(2-hydroxyisobutyryl)lysine. An alpha-D-glucoside contacts are provided by Y109, K111, Y128, and D135. Residues C137 and C163 are joined by a disulfide bond. Residue K159 is modified to N6-acetyllysine. An N-linked (GlcNAc...) asparagine glycan is attached at N179. A 1-1 repeat occupies 191-202; sequence VESGSLEDDWDF. The tract at residues 191-255 is 4 X approximate repeats; it reads VESGSLEDDW…DAKKPEDWDE (65 aa). The interval 193 to 270 is disordered; the sequence is SGSLEDDWDF…WEPPVIQNPE (78 aa). The segment at 198-308 is P-domain; the sequence is DDWDFLPPKK…YSPDSNIYAY (111 aa). The segment covering 207-251 has biased composition (basic and acidic residues); sequence KIKDPDAAKPEDWDDRAKIDDPTDSKPEDWDKPEHIPDPDAKKPE. K209 bears the N6-acetyllysine mark. 6 repeat units span residues 210 to 221, 227 to 238, 244 to 255, 259 to 269, 273 to 283, and 287 to 297. Residues 237–270 are interaction with PPIB; that stretch reads DKPEHIPDPDAKKPEDWDEEMDGEWEPPVIQNPE. Acidic residues predominate over residues 252 to 261; it reads DWDEEMDGEW. A 3 X approximate repeats region spans residues 259–297; sequence GEWEPPVIQNPEYKGEWKPRQIDNPEYKGIWIHPEIDNP. The segment at 309 to 417 is C-domain; it reads ENFAVLGLDL…AAAGQAKDEL (109 aa). Position 317 (D317) interacts with an alpha-D-glucoside. D328 contributes to the Ca(2+) binding site. A disordered region spans residues 350–417; it reads TKAAEKQMKD…AAAGQAKDEL (68 aa). A compositionally biased stretch (basic and acidic residues) spans 352 to 378; it reads AAEKQMKDKQDEEQRLHEEEEEKKGKE. Acidic residues predominate over residues 379 to 408; sequence EEEADKDDDEDKDEDEEDEDEKEEEEEEDA. The Prevents secretion from ER signature appears at 414 to 417; the sequence is KDEL.

Belongs to the calreticulin family. In terms of assembly, monomer. Component of an EIF2 complex at least composed of CELF1/CUGBP1, CALR, CALR3, EIF2S1, EIF2S2, HSP90B1 and HSPA5. Interacts with PDIA3/ERp57 and SPACA9. Interacts with TRIM21. Interacts with NR3C1. Interacts with PPIB. Interacts (via P-domain) with PDIA5. Interacts with GABARAP. Interacts with CLCC1.

The protein resides in the endoplasmic reticulum lumen. It is found in the cytoplasm. It localises to the cytosol. The protein localises to the secreted. Its subcellular location is the extracellular space. The protein resides in the extracellular matrix. It is found in the cell surface. It localises to the sarcoplasmic reticulum lumen. The protein localises to the cytoplasmic vesicle. Its subcellular location is the secretory vesicle. The protein resides in the cortical granule. It is found in the cytolytic granule. In terms of biological role, calcium-binding chaperone that promotes folding, oligomeric assembly and quality control in the endoplasmic reticulum (ER) via the calreticulin/calnexin cycle. This lectin interacts transiently with almost all of the monoglucosylated glycoproteins that are synthesized in the ER. Interacts with the DNA-binding domain of NR3C1 and mediates its nuclear export. Involved in maternal gene expression regulation. May participate in oocyte maturation via the regulation of calcium homeostasis. Present in the cortical granules of non-activated oocytes, is exocytosed during the cortical reaction in response to oocyte activation and might participate in the block to polyspermy. In Bos taurus (Bovine), this protein is Calreticulin (CALR).